The following is a 276-amino-acid chain: 3-methyl-2-oxobutanoate hydroxymethyltransferase (276 aa).

Mg(2+) is bound by residues aspartate 49 and aspartate 88. 3-methyl-2-oxobutanoate contacts are provided by residues 49–50 (DS), aspartate 88, and lysine 118. Glutamate 120 lines the Mg(2+) pocket. Glutamate 187 serves as the catalytic Proton acceptor.

Belongs to the PanB family. In terms of assembly, homodecamer; pentamer of dimers. Requires Mg(2+) as cofactor.

It is found in the cytoplasm. It catalyses the reaction 3-methyl-2-oxobutanoate + (6R)-5,10-methylene-5,6,7,8-tetrahydrofolate + H2O = 2-dehydropantoate + (6S)-5,6,7,8-tetrahydrofolate. The protein operates within cofactor biosynthesis; (R)-pantothenate biosynthesis; (R)-pantoate from 3-methyl-2-oxobutanoate: step 1/2. Its function is as follows. Catalyzes the reversible reaction in which hydroxymethyl group from 5,10-methylenetetrahydrofolate is transferred onto alpha-ketoisovalerate to form ketopantoate. In Afipia carboxidovorans (strain ATCC 49405 / DSM 1227 / KCTC 32145 / OM5) (Oligotropha carboxidovorans), this protein is 3-methyl-2-oxobutanoate hydroxymethyltransferase.